The primary structure comprises 2359 residues: Pre-mRNA-processing-splicing factor 8A (2359 aa).

A disordered region spans residues 1–54 (MWNNNDGMPLAPPGTGGSMMPPPPAAHPSYTALPPPSNPTPPVEPTPEEAEAKL). Pro residues predominate over residues 33–45 (LPPPSNPTPPVEP). Positions 2127-2258 (TYIMPKNILK…LTSYKLTQTG (132 aa)) constitute an MPN domain.

As to quaternary structure, interacts with CLO.

The protein resides in the nucleus. Its function is as follows. Functions as a scaffold that mediates the ordered assembly of spliceosomal proteins and snRNAs. Required for the assembly of the U4/U6-U5 tri-snRNP complex. Required for embryo development. Required for splicing efficiency of COOLAIR introns and usage of the proximal poly(A) site. COOLAIR is a set of long non-coding antisense transcripts produced at the FLOWERING LOCUS C (FLC). COOLAIR initiates just downstream of the major sense transcript poly(A) site and terminates either early or extends into the FLC promoter region. Splicing of COOLAIR by PRP8A is functionally important for FLC regulation. The protein is Pre-mRNA-processing-splicing factor 8A of Arabidopsis thaliana (Mouse-ear cress).